An 81-amino-acid polypeptide reads, in one-letter code: ATP synthase subunit c, chloroplastic (81 aa).

Transmembrane regions (helical) follow at residues 3-23 (PLIASASVIAAGLAVGLASIG) and 57-77 (LAFMEALTIYGLVVALALLFA).

It belongs to the ATPase C chain family. F-type ATPases have 2 components, F(1) - the catalytic core - and F(0) - the membrane proton channel. F(1) has five subunits: alpha(3), beta(3), gamma(1), delta(1), epsilon(1). F(0) has four main subunits: a(1), b(1), b'(1) and c(10-14). The alpha and beta chains form an alternating ring which encloses part of the gamma chain. F(1) is attached to F(0) by a central stalk formed by the gamma and epsilon chains, while a peripheral stalk is formed by the delta, b and b' chains.

The protein resides in the plastid. The protein localises to the chloroplast thylakoid membrane. Functionally, f(1)F(0) ATP synthase produces ATP from ADP in the presence of a proton or sodium gradient. F-type ATPases consist of two structural domains, F(1) containing the extramembraneous catalytic core and F(0) containing the membrane proton channel, linked together by a central stalk and a peripheral stalk. During catalysis, ATP synthesis in the catalytic domain of F(1) is coupled via a rotary mechanism of the central stalk subunits to proton translocation. Its function is as follows. Key component of the F(0) channel; it plays a direct role in translocation across the membrane. A homomeric c-ring of between 10-14 subunits forms the central stalk rotor element with the F(1) delta and epsilon subunits. The polypeptide is ATP synthase subunit c, chloroplastic (Chaetosphaeridium globosum (Charophycean green alga)).